A 301-amino-acid polypeptide reads, in one-letter code: Probable alpha-L-glutamate ligase 1 (301 aa).

The ATP-grasp domain occupies 104–287; it reads LQLLSRKGIG…VTEPIVEYIE (184 aa). ATP is bound by residues K141, 178-179, D187, and 211-213; these read EY and RSN. 3 residues coordinate Mg(2+): D248, E260, and N262. 3 residues coordinate Mn(2+): D248, E260, and N262.

Belongs to the RimK family. Mg(2+) is required as a cofactor. Requires Mn(2+) as cofactor.

This chain is Probable alpha-L-glutamate ligase 1, found in Shewanella sp. (strain ANA-3).